We begin with the raw amino-acid sequence, 379 residues long: Alcohol dehydrogenase class-2 isozyme 1 (379 aa).

The Zn(2+) site is built by Cys47, His69, Cys99, Cys102, Cys105, Cys113, and Cys176. NAD(+) is bound by residues 205-210 (GLGGVG), Asp229, Lys234, 298-300 (VGV), and Arg374.

This sequence belongs to the zinc-containing alcohol dehydrogenase family. Class-II subfamily. In terms of assembly, homodimer. Requires Zn(2+) as cofactor.

Its subcellular location is the cytoplasm. The enzyme catalyses a primary alcohol + NAD(+) = an aldehyde + NADH + H(+). It carries out the reaction a secondary alcohol + NAD(+) = a ketone + NADH + H(+). In Oryctolagus cuniculus (Rabbit), this protein is Alcohol dehydrogenase class-2 isozyme 1 (ADH2-1).